The sequence spans 660 residues: Putative ATP-dependent RNA helicase Pl10 (660 aa).

The span at 1-11 (MSHVAEEDELG) shows a compositional bias: acidic residues. Residues 1–117 (MSHVAEEDEL…SRGGRSGFGK (117 aa)) are disordered. S2 is modified (N-acetylserine). Low complexity predominate over residues 12–21 (LDQQLAGLDL). The segment covering 24 to 34 (RDSQSGGSTAS) has biased composition (polar residues). The span at 44-66 (RNREAAKAFYDKDGSRWSKDKDA) shows a compositional bias: basic and acidic residues. K55 is subject to N6-acetyllysine. A phosphoserine mark is found at S80, S84, and S89. Basic and acidic residues predominate over residues 93–103 (GRFDERGRSDY). Omega-N-methylarginine is present on R100. Residue S101 is modified to Phosphoserine. Y103 carries the phosphotyrosine modification. At R109 the chain carries Omega-N-methylarginine. N6-acetyllysine is present on K117. Positions 179-207 (ESFSDVEMGEIIMGNIELTRYTRPTPVQK) match the Q motif motif. The residue at position 182 (S182) is a Phosphoserine. 199-206 (YTRPTPVQ) is a binding site for ATP. A Helicase ATP-binding domain is found at 210–402 (IPIIKEKRDL…RDFLDEYIFL (193 aa)). Residue K214 forms a Glycyl lysine isopeptide (Lys-Gly) (interchain with G-Cter in SUMO2) linkage. 223–230 (AQTGSGKT) contacts ATP. Positions 346–349 (DEAD) match the DEAD box motif. Residues 413–574 (NITQKVVWVE…EVPSWLENMA (162 aa)) enclose the Helicase C-terminal domain. Phosphoserine is present on S455. Omega-N-methylarginine is present on R590. 3 positions are modified to phosphoserine: S592, S603, and S610. The disordered stretch occupies residues 598–632 (RDYRQSSGASSSSFSSGRASNSRSGGGSHGSSRGF). Positions 602–620 (QSSGASSSSFSSGRASNSR) are enriched in low complexity. 2 positions are modified to omega-N-methylarginine: R615 and R630. Residues 621–632 (SGGGSHGSSRGF) show a composition bias toward gly residues.

It belongs to the DEAD box helicase family. DDX3/DED1 subfamily. Testis.

It catalyses the reaction ATP + H2O = ADP + phosphate + H(+). Functionally, putative ATP-dependent RNA helicase. Possible role in a key step of the spermatogenic process. This is Putative ATP-dependent RNA helicase Pl10 (D1Pas1) from Mus musculus (Mouse).